Reading from the N-terminus, the 411-residue chain is Serine hydroxymethyltransferase (411 aa).

(6S)-5,6,7,8-tetrahydrofolate is bound by residues Leu117 and 121-123 (GHL). N6-(pyridoxal phosphate)lysine is present on Lys226. Residues Glu241 and 349–351 (SPF) contribute to the (6S)-5,6,7,8-tetrahydrofolate site.

Belongs to the SHMT family. Homodimer. Pyridoxal 5'-phosphate serves as cofactor.

The protein localises to the cytoplasm. The enzyme catalyses (6R)-5,10-methylene-5,6,7,8-tetrahydrofolate + glycine + H2O = (6S)-5,6,7,8-tetrahydrofolate + L-serine. The protein operates within one-carbon metabolism; tetrahydrofolate interconversion. Its pathway is amino-acid biosynthesis; glycine biosynthesis; glycine from L-serine: step 1/1. Its function is as follows. Catalyzes the reversible interconversion of serine and glycine with tetrahydrofolate (THF) serving as the one-carbon carrier. This reaction serves as the major source of one-carbon groups required for the biosynthesis of purines, thymidylate, methionine, and other important biomolecules. Also exhibits THF-independent aldolase activity toward beta-hydroxyamino acids, producing glycine and aldehydes, via a retro-aldol mechanism. The polypeptide is Serine hydroxymethyltransferase (Oceanobacillus iheyensis (strain DSM 14371 / CIP 107618 / JCM 11309 / KCTC 3954 / HTE831)).